The primary structure comprises 273 residues: Dermonecrotic toxin LdSicTox-alphaIB1aiv (273 aa).

Residue H5 is part of the active site. 2 residues coordinate Mg(2+): E25 and D27. Catalysis depends on H41, which acts as the Nucleophile. Disulfide bonds link C45–C51 and C47–C190. Residue D85 participates in Mg(2+) binding. N-linked (GlcNAc...) asparagine glycosylation occurs at N250.

Belongs to the arthropod phospholipase D family. Class II subfamily. It depends on Mg(2+) as a cofactor. As to expression, expressed by the venom gland.

The protein resides in the secreted. It carries out the reaction an N-(acyl)-sphingosylphosphocholine = an N-(acyl)-sphingosyl-1,3-cyclic phosphate + choline. The catalysed reaction is an N-(acyl)-sphingosylphosphoethanolamine = an N-(acyl)-sphingosyl-1,3-cyclic phosphate + ethanolamine. It catalyses the reaction a 1-acyl-sn-glycero-3-phosphocholine = a 1-acyl-sn-glycero-2,3-cyclic phosphate + choline. The enzyme catalyses a 1-acyl-sn-glycero-3-phosphoethanolamine = a 1-acyl-sn-glycero-2,3-cyclic phosphate + ethanolamine. Functionally, dermonecrotic toxins cleave the phosphodiester linkage between the phosphate and headgroup of certain phospholipids (sphingolipid and lysolipid substrates), forming an alcohol (often choline) and a cyclic phosphate. This toxin acts on sphingomyelin (SM). It may also act on ceramide phosphoethanolamine (CPE), lysophosphatidylcholine (LPC) and lysophosphatidylethanolamine (LPE), but not on lysophosphatidylserine (LPS), and lysophosphatidylglycerol (LPG). It acts by transphosphatidylation, releasing exclusively cyclic phosphate products as second products. Induces dermonecrosis, hemolysis, increased vascular permeability, edema, inflammatory response, and platelet aggregation. This Loxosceles deserta (Desert recluse spider) protein is Dermonecrotic toxin LdSicTox-alphaIB1aiv.